The sequence spans 172 residues: Shikimate kinase (172 aa).

ATP is bound at residue 14–19 (GAGKST). Position 18 (S18) interacts with Mg(2+). 3 residues coordinate substrate: D36, R60, and G82. Residue R120 coordinates ATP. Residue R140 participates in substrate binding.

This sequence belongs to the shikimate kinase family. In terms of assembly, monomer. The cofactor is Mg(2+).

The protein resides in the cytoplasm. It catalyses the reaction shikimate + ATP = 3-phosphoshikimate + ADP + H(+). Its pathway is metabolic intermediate biosynthesis; chorismate biosynthesis; chorismate from D-erythrose 4-phosphate and phosphoenolpyruvate: step 5/7. Catalyzes the specific phosphorylation of the 3-hydroxyl group of shikimic acid using ATP as a cosubstrate. The sequence is that of Shikimate kinase from Tolumonas auensis (strain DSM 9187 / NBRC 110442 / TA 4).